A 156-amino-acid polypeptide reads, in one-letter code: Ribosomal RNA large subunit methyltransferase H (156 aa).

S-adenosyl-L-methionine-binding positions include L72, G104, and 123 to 128 (FGAMVW).

Belongs to the RNA methyltransferase RlmH family. Homodimer.

The protein resides in the cytoplasm. The enzyme catalyses pseudouridine(1915) in 23S rRNA + S-adenosyl-L-methionine = N(3)-methylpseudouridine(1915) in 23S rRNA + S-adenosyl-L-homocysteine + H(+). In terms of biological role, specifically methylates the pseudouridine at position 1915 (m3Psi1915) in 23S rRNA. The polypeptide is Ribosomal RNA large subunit methyltransferase H (Ruegeria pomeroyi (strain ATCC 700808 / DSM 15171 / DSS-3) (Silicibacter pomeroyi)).